The sequence spans 578 residues: Arginine--tRNA ligase (578 aa).

The 'HIGH' region motif lies at 127–137 (PNLAKEMHVGH).

Belongs to the class-I aminoacyl-tRNA synthetase family. Monomer.

It is found in the cytoplasm. The catalysed reaction is tRNA(Arg) + L-arginine + ATP = L-arginyl-tRNA(Arg) + AMP + diphosphate. This chain is Arginine--tRNA ligase, found in Pseudomonas fluorescens (strain SBW25).